A 170-amino-acid polypeptide reads, in one-letter code: Adenine phosphoribosyltransferase (170 aa).

Belongs to the purine/pyrimidine phosphoribosyltransferase family. Homodimer.

It is found in the cytoplasm. The catalysed reaction is AMP + diphosphate = 5-phospho-alpha-D-ribose 1-diphosphate + adenine. The protein operates within purine metabolism; AMP biosynthesis via salvage pathway; AMP from adenine: step 1/1. Catalyzes a salvage reaction resulting in the formation of AMP, that is energically less costly than de novo synthesis. This is Adenine phosphoribosyltransferase from Geobacillus sp. (strain WCH70).